The sequence spans 828 residues: Periplasmic nitrate reductase (828 aa).

The segment at residues 1 to 31 (MKLSRRSFMKANAVAAAAAAAGLSVPGVARA) is a signal peptide (tat-type signal). Positions 39 to 95 (IKWDKAPCRFCGTGCGVLVGTQQGRVVACQGDPDAPVNRGLNCIKGYFLPKIMYGKD) constitute a 4Fe-4S Mo/W bis-MGD-type domain. Residues C46, C49, C53, and C81 each coordinate [4Fe-4S] cluster. Residues K83, Q150, N175, C179, 212 to 219 (WGANMAEM), 243 to 247 (STYQH), 262 to 264 (QSD), M372, Q376, N482, 508 to 509 (SD), K531, D558, and 718 to 727 (TGRVLEHWHT) contribute to the Mo-bis(molybdopterin guanine dinucleotide) site. F794 contacts substrate. Mo-bis(molybdopterin guanine dinucleotide) contacts are provided by N802 and K819.

The protein belongs to the prokaryotic molybdopterin-containing oxidoreductase family. NasA/NapA/NarB subfamily. Component of the periplasmic nitrate reductase NapAB complex composed of NapA and NapB. The cofactor is [4Fe-4S] cluster. Mo-bis(molybdopterin guanine dinucleotide) is required as a cofactor. Post-translationally, predicted to be exported by the Tat system. The position of the signal peptide cleavage has not been experimentally proven.

It localises to the periplasm. It catalyses the reaction 2 Fe(II)-[cytochrome] + nitrate + 2 H(+) = 2 Fe(III)-[cytochrome] + nitrite + H2O. Its function is as follows. Catalytic subunit of the periplasmic nitrate reductase complex NapAB. Receives electrons from NapB and catalyzes the reduction of nitrate to nitrite. The protein is Periplasmic nitrate reductase of Escherichia coli (strain K12 / MC4100 / BW2952).